A 493-amino-acid chain; its full sequence is Probable cytochrome P450 508A2 (493 aa).

Residues 1–21 form a helical membrane-spanning segment; the sequence is MIFGIIVYLFLIYILHNAYSK. A heme-binding site is contributed by Cys439.

Belongs to the cytochrome P450 family. Heme serves as cofactor.

It localises to the membrane. The sequence is that of Probable cytochrome P450 508A2 (cyp508A2-1) from Dictyostelium discoideum (Social amoeba).